A 618-amino-acid chain; its full sequence is Proline--tRNA ligase (618 aa).

This sequence belongs to the class-II aminoacyl-tRNA synthetase family. ProS type 1 subfamily. In terms of assembly, homodimer.

The protein resides in the cytoplasm. The catalysed reaction is tRNA(Pro) + L-proline + ATP = L-prolyl-tRNA(Pro) + AMP + diphosphate. Catalyzes the attachment of proline to tRNA(Pro) in a two-step reaction: proline is first activated by ATP to form Pro-AMP and then transferred to the acceptor end of tRNA(Pro). As ProRS can inadvertently accommodate and process non-cognate amino acids such as alanine and cysteine, to avoid such errors it has two additional distinct editing activities against alanine. One activity is designated as 'pretransfer' editing and involves the tRNA(Pro)-independent hydrolysis of activated Ala-AMP. The other activity is designated 'posttransfer' editing and involves deacylation of mischarged Ala-tRNA(Pro). The misacylated Cys-tRNA(Pro) is not edited by ProRS. The sequence is that of Proline--tRNA ligase from Streptococcus pyogenes serotype M18 (strain MGAS8232).